Consider the following 354-residue polypeptide: Guanine nucleotide-binding protein subunit alpha-14 (354 aa).

The region spanning 33–354 (RELKLLLLGT…QLNLREFNLV (322 aa)) is the G-alpha domain. The segment at 36–49 (KLLLLGTGESGKST) is G1 motif. Residues 41 to 48 (GTGESGKS), 175 to 181 (LRVRVPT), 200 to 204 (DVGGQ), 269 to 272 (NKKD), and Ala326 contribute to the GTP site. 2 residues coordinate Mg(2+): Ser48 and Thr181. The G2 motif stretch occupies residues 173 to 181 (DVLRVRVPT). Positions 196-205 (FRMVDVGGQR) are G3 motif. Residues 265–272 (ILFLNKKD) form a G4 motif region. A G5 motif region spans residues 324–329 (TCATDT).

It belongs to the G-alpha family. G(q) subfamily. G proteins are composed of 3 units; alpha, beta and gamma. The alpha chain contains the guanine nucleotide binding site.

Guanine nucleotide-binding proteins (G proteins) are involved as modulators or transducers in various transmembrane signaling systems. Acts as an activator of phospholipase C. Mediates responses to trypsin. This is Guanine nucleotide-binding protein subunit alpha-14 (gna14) from Xenopus laevis (African clawed frog).